The primary structure comprises 436 residues: MANIFEVPQPGNDLLEKANKVRLASIEISQTENQNRIKALNFMADYLEKNSYEILDANNADYSSAQKKGISRALLSRLKLSKLKLNSGIEGVRKVGDLADPVNQVQIKRELSKGLFLERKTVPIGVLGVIFESRPDAVMQISSLAIRSGNGVMLKGGSEANLTNTAIVKALQEGLNASGLDKNAICLLTSRKDSMAMLNLEKYINLIIPRGSNELVKFIQENTRIPVLGHADGICHLFIDIEANLEMALSVALDSKIQYPAACNAIETLLLHKDIAPTFLEKAIPLFKSNDVKLIGDMRSVELGVKYEASLEDWKTEYLDLILSIKIVDDLEEAITHIQKYSSKHTDGIITENSHTANKFMNVIDSAGVFHNCSTRFADGFRYGFGAEVGISTQTLPPRGPVGLEGLVTYKYFLKGDGNIVDDFSSGKAIYTHKDL.

It belongs to the gamma-glutamyl phosphate reductase family.

The protein resides in the cytoplasm. The catalysed reaction is L-glutamate 5-semialdehyde + phosphate + NADP(+) = L-glutamyl 5-phosphate + NADPH + H(+). It functions in the pathway amino-acid biosynthesis; L-proline biosynthesis; L-glutamate 5-semialdehyde from L-glutamate: step 2/2. Functionally, catalyzes the NADPH-dependent reduction of L-glutamate 5-phosphate into L-glutamate 5-semialdehyde and phosphate. The product spontaneously undergoes cyclization to form 1-pyrroline-5-carboxylate. This Prochlorococcus marinus (strain AS9601) protein is Gamma-glutamyl phosphate reductase.